Reading from the N-terminus, the 143-residue chain is Large ribosomal subunit protein uL16 (143 aa).

Positions 1-17 are enriched in basic residues; sequence MLQPKRTKFRKAHKGRI. Residues 1-21 form a disordered region; sequence MLQPKRTKFRKAHKGRIHGNA.

Belongs to the universal ribosomal protein uL16 family. Part of the 50S ribosomal subunit.

Its function is as follows. Binds 23S rRNA and is also seen to make contacts with the A and possibly P site tRNAs. The polypeptide is Large ribosomal subunit protein uL16 (Rhizorhabdus wittichii (strain DSM 6014 / CCUG 31198 / JCM 15750 / NBRC 105917 / EY 4224 / RW1) (Sphingomonas wittichii)).